The following is a 59-amino-acid chain: Large ribosomal subunit protein bL32 (59 aa).

The protein belongs to the bacterial ribosomal protein bL32 family.

The polypeptide is Large ribosomal subunit protein bL32 (Anaeromyxobacter dehalogenans (strain 2CP-C)).